The primary structure comprises 543 residues: Zinc finger CCCH-type with G patch domain-containing protein (543 aa).

Disordered stretches follow at residues 55–79 (AATS…DNPI) and 95–132 (TEDS…DKLD). A compositionally biased stretch (low complexity) spans 65-76 (DTAGRAPPATAD). Acidic residues predominate over residues 118–131 (DDDADNDDDADDKL). Residues 186 to 209 (PCAYFLEGECRFTDEKCRYSHGEV) form a C3H1-type zinc finger. The disordered stretch occupies residues 272 to 304 (PFEDLLPLDEDEDGQEAAEDSESDTDGADEEEA). Residues 277 to 304 (LPLDEDEDGQEAAEDSESDTDGADEEEA) are compositionally biased toward acidic residues. Residues 335–381 (TRGIGSKIMQKMGYIVGTGLGREGEGIVVPVSAQVLPQGRSLDYCME) form the G-patch domain. Residues 438-460 (GAAGGESSRPNRNRPGALSRQEL) are disordered.

It localises to the nucleus. Its function is as follows. Transcription repressor. This chain is Zinc finger CCCH-type with G patch domain-containing protein, found in Anopheles gambiae (African malaria mosquito).